Consider the following 899-residue polypeptide: Core protein VP3 (899 aa).

Residues 1 to 22 (MAEPPDAATPKTSPYLKGDELS) form a disordered region.

The protein belongs to the orbivirus VP3 family.

Its subcellular location is the virion. In terms of biological role, the VP3 protein is one of the five proteins (with VP1, VP4, VP6 and VP7) which form the inner capsid of the virus. This chain is Core protein VP3 (Segment-3), found in Antilocapra americana (Pronghorn).